A 228-amino-acid polypeptide reads, in one-letter code: Ribosomal RNA small subunit methyltransferase G (228 aa).

Residues Gly89, Leu94, 140-141 (VE), and Arg159 each bind S-adenosyl-L-methionine.

This sequence belongs to the methyltransferase superfamily. RNA methyltransferase RsmG family.

The protein resides in the cytoplasm. The enzyme catalyses guanosine(527) in 16S rRNA + S-adenosyl-L-methionine = N(7)-methylguanosine(527) in 16S rRNA + S-adenosyl-L-homocysteine. Its function is as follows. Specifically methylates the N7 position of guanine in position 527 of 16S rRNA. The polypeptide is Ribosomal RNA small subunit methyltransferase G (Burkholderia cenocepacia (strain HI2424)).